A 481-amino-acid chain; its full sequence is Tripartite motif-containing protein 10 (481 aa).

The RING-type zinc finger occupies 16-61 (CPICQGTLREPVTIDCGHNFCRACLTRYCEIPGPDLEESPTCPLCK). Residues 94-135 (GEEDVCQEHGEKIYFFCEDDEMQLCVVCREAGEHATHTMRFL) form a B box-type zinc finger. Positions 99, 102, 121, and 127 each coordinate Zn(2+). Positions 142–177 (YREQIHKCLKRLRKEREETQEIQSRENKRMQVLLTQ) form a coiled coil. The B30.2/SPRY domain occupies 292–481 (REMKMFLEKL…GRGSSFFLSS (190 aa)).

The protein belongs to the TRIM/RBCC family. As to quaternary structure, interacts with IFNAR1; this interaction prevents association of IFNAR1 with TYK2.

The protein localises to the cytoplasm. Functionally, E3 ligase that plays an essential role in the differentiation and survival of terminal erythroid cells. May directly bind to PTEN and promote its ubiquitination, resulting in its proteasomal degradation and activation of hypertrophic signaling. In addition, plays a role in immune response regulation by repressing the phosphorylation of STAT1 and STAT2 in the interferon/JAK/STAT signaling pathway independent of its E3 ligase activity. Mechanistically, interacts with the intracellular domain of IFNAR1 and thereby inhibits the association of TYK2 and IFNAR1. The sequence is that of Tripartite motif-containing protein 10 (TRIM10) from Pan troglodytes (Chimpanzee).